The following is a 347-amino-acid chain: MMAGCGEIDHSINMLPTNRKANESCSNTAPSLTVPECAICLQTCVHPVSLPCKHVFCYLCVKGASWLGKRCALCRQEIPEDFLDKPTLLSPEELKAASRGNGEYAWYYEGRNGWWQYDERTSRELEDAFSKGKKSTEMLIAGFLYVADLENMVQYRRNEHGRRRKIKRDIIDIPKKGVAGLRLDCDANTVNLARESSADGADSVPAQSGASVQSSSVRPLTSVDGQLTSPATPSPDAGTSLEDSFAHLQLGGDSIAERSHRGEGEEEHESPSSGRVPAPDTSIEETESDASSDSEDVSALVAQHSLTQQRLLVPNPSQTVSDRSVAAGGTVSVRSRRPDGQCTVTEV.

Residues 37 to 75 (CAICLQTCVHPVSLPCKHVFCYLCVKGASWLGKRCALCR) form an RING-type zinc finger. Glycyl lysine isopeptide (Lys-Gly) (interchain with G-Cter in ubiquitin) cross-links involve residues K85, K95, K131, and K176. Residues 92 to 168 (EELKAASRGN…EHGRRRKIKR (77 aa)) enclose the WWE domain. 2 disordered regions span residues 196-241 (SSAD…GTSL) and 257-347 (ERSH…VTEV). Low complexity predominate over residues 203–217 (SVPAQSGASVQSSSV). The segment covering 282-296 (SIEETESDASSDSED) has biased composition (acidic residues). Phosphoserine is present on residues S288 and S292. Over residues 304–322 (HSLTQQRLLVPNPSQTVSD) the composition is skewed to polar residues.

In terms of assembly, interacts with poly-ADP-ribosylated AXIN1, AXIN2, BLZF1 and CASC3. In terms of processing, ubiquitinated; autoubiquitinated. Autoubiquitination is enhanced upon poly(ADP-ribose)-binding.

It localises to the cytoplasm. Its subcellular location is the cytosol. It catalyses the reaction S-ubiquitinyl-[E2 ubiquitin-conjugating enzyme]-L-cysteine + [acceptor protein]-L-lysine = [E2 ubiquitin-conjugating enzyme]-L-cysteine + N(6)-ubiquitinyl-[acceptor protein]-L-lysine.. It functions in the pathway protein modification; protein ubiquitination. In terms of biological role, E3 ubiquitin-protein ligase that specifically binds poly-ADP-ribosylated proteins and mediates their ubiquitination and subsequent degradation. Acts as an activator of the Wnt signaling pathway by mediating the ubiquitination of poly-ADP-ribosylated AXIN1 and AXIN2, 2 key components of the beta-catenin destruction complex. Acts in cooperation with tankyrase proteins (TNKS and TNKS2), which mediate poly-ADP-ribosylation of target proteins AXIN1, AXIN2, BLZF1, CASC3, TNKS and TNKS2. Recognizes and binds tankyrase-dependent poly-ADP-ribosylated proteins via its WWE domain and mediates their ubiquitination. This chain is E3 ubiquitin-protein ligase RNF146-B (RNF146B), found in Bos taurus (Bovine).